A 65-amino-acid polypeptide reads, in one-letter code: Large ribosomal subunit protein bL35 (65 aa).

A disordered region spans residues 20–42 (GKVRRHHANASHIMTTKTTKRKR).

The protein belongs to the bacterial ribosomal protein bL35 family.

The chain is Large ribosomal subunit protein bL35 from Syntrophus aciditrophicus (strain SB).